The sequence spans 137 residues: MRTLGVDLGRVRIGLAVADEILRTARAVTTVVRRTEAEDLAAIAEVARDYEVTRAVVGLPLNMDGTEGPSARLARGFAPRLEAALGVPVELFDERLSSFEAESRLRARGLSAREQRGQVDAEAAAVILQGWLDRRAP.

It belongs to the YqgF nuclease family.

It is found in the cytoplasm. Functionally, could be a nuclease involved in processing of the 5'-end of pre-16S rRNA. The protein is Putative pre-16S rRNA nuclease of Anaeromyxobacter dehalogenans (strain 2CP-1 / ATCC BAA-258).